A 512-amino-acid chain; its full sequence is Maturase K (512 aa).

This sequence belongs to the intron maturase 2 family. MatK subfamily.

The protein resides in the plastid. Its subcellular location is the chloroplast. Functionally, usually encoded in the trnK tRNA gene intron. Probably assists in splicing its own and other chloroplast group II introns. This Piper cenocladum (Ant piper) protein is Maturase K.